Consider the following 361-residue polypeptide: Peroxidase A (361 aa).

It belongs to the peroxidase family. In terms of processing, partially N-glycosylated.

It is found in the secreted. It carries out the reaction 2 a phenolic donor + H2O2 = 2 a phenolic radical donor + 2 H2O. The chain is Peroxidase A from Aloe vera (Aloe).